A 464-amino-acid chain; its full sequence is D-2-hydroxyglutarate dehydrogenase (464 aa).

Residues 37-216 (FAPAPSAIVF…VEATMRLERQ (180 aa)) form the FAD-binding PCMH-type domain. Residues Arg-325, Ser-329, and Lys-339 each coordinate (R)-2-hydroxyglutarate. (R)-malate-binding residues include Arg-325, Ser-329, and Lys-339. Zn(2+)-binding residues include His-374 and His-381. Asn-383 serves as a coordination point for (R)-2-hydroxyglutarate. Glu-420 lines the Zn(2+) pocket. His-421 is a binding site for (R)-2-hydroxyglutarate. His-421 is a (R)-malate binding site.

The protein belongs to the FAD-binding oxidoreductase/transferase type 4 family. Homodimer. FAD is required as a cofactor.

The enzyme catalyses (R)-2-hydroxyglutarate + A = 2-oxoglutarate + AH2. The catalysed reaction is (R)-malate + A = oxaloacetate + AH2. Its activity is regulated as follows. Activated by Zn(2+) ions at low concentrations (10 uM) and inhibited by Zn(2+), Fe(2+) and Ni(2+) at high concentrations (10 mM). In terms of biological role, catalyzes the dehydrogenation of (R)-2-hydroxyglutarate (D-2-hydroxyglutarate or D-2-HG) to 2-oxoglutarate and of (R)-malate (D-malate) to oxaloacetate. Is functionally tied to L-serine biosynthesis, via its coupling with the D-3-phosphoglycerate dehydrogenase SerA, encoded by the adjacent gene in the locus. Is required for the utilization of D-2-hydroxyglutarate as well as D-malate as the sole carbon source for growth of P.stutzeri. Active in vitro with artificial electron acceptors such as 2,6-dichlorophenolindophenol (DCPIP) and appears to couple with electron transfer flavoprotein (ETF) for efficient oxidation of both D-2-hydroxyglutarate and D-malate in vivo. Cannot catalyze the oxidation of L-2-hydroxyglutarate, D-lactate, D-tartrate, D-2-hydroxybutanoate, D-mandelate, D-glycerate and D-phenyllactate. The polypeptide is D-2-hydroxyglutarate dehydrogenase (Stutzerimonas stutzeri (strain A1501) (Pseudomonas stutzeri)).